Consider the following 316-residue polypeptide: C-type lectin domain family 10 member A (316 aa).

At 1-39 (MTRTYENFQYLENKVKVQGFKNGPLPLQSLLQRLCSGPC) the chain is on the cytoplasmic side. The short motif at 5–8 (YENF) is the Endocytosis signal element. The helical; Signal-anchor for type II membrane protein transmembrane segment at 40–60 (HLLLSLGLGLLLLVIICVVGF) threads the bilayer. Residues 61–316 (QNSKFQRDLV…GLGQTSQESH (256 aa)) lie on the Extracellular side of the membrane. Residues N78 and N173 are each glycosylated (N-linked (GlcNAc...) asparagine). The stretch at 85–176 (AEIQALTSQG…VATLNNNAST (92 aa)) forms a coiled coil. 3 disulfide bridges follow: C181–C192, C209–C304, and C282–C296. Positions 188-305 (HQDSCYWFSH…CQRPYHWVCE (118 aa)) constitute a C-type lectin domain. Positions 218, 220, 224, and 243 each coordinate Ca(2+). A glycoprotein contacts are provided by Q267 and D269. D269, D270, E280, and D281 together coordinate Ca(2+). E280 contributes to the a glycoprotein binding site. Residues H286 and N292 each coordinate a glycoprotein. 3 residues coordinate Ca(2+): N292, D293, and E305.

As to quaternary structure, interacts with A-, B- and C-domain containing PTPRC/CD45 isoforms: isoform 1/CD45ABC, isoform 3/CD45AB, isoform 5/CD45BC and isoform 7/CD45B. Does not interact with PTPRC/CD45 isoform 2/CD45RO, a memory T cell marker. Expressed in myeloid antigen presenting cells in lymph nodes and skin (at protein level). Expressed in dermal dendritic cells (at protein level).

It localises to the cell membrane. The protein resides in the early endosome membrane. It is found in the lysosome membrane. Its function is as follows. C-type lectin receptor involved in recognition of N-acetylgalactosamine (GalNAc)-terminated glycans by myeloid antigen presenting cells (APCs). Binds in a Ca(2+)-dependent manner to alpha- and beta-linked GalNAc residues on glycoprotein and glycolipid antigens, including alphaGalNAc- and Galbeta1-&gt;3GalNAc-O-Ser/Thr also known as Tn and T antigens, LacdiNAc epitope GalNAcbeta1-&gt;4GlcNAc and its derivative GalNAcbeta1-&gt;4-(Fucalpha1-&gt;3)GlcNAc, O-linked core 5 and 6 glycans, and GM2 and GD2 gangliosides. Acts as a signaling receptor at the interface of APC-T cell interactions. On immature dendritic cells, recognizes Tn antigen-carrying PTPRC/CD45 receptor on effector T cells and downregulates PTRPN/CD45 phosphatase activity with an impact on T cell activation threshold, cytokine production and proliferation. Modulates dendritic cell maturation toward a tolerogenic phenotype leading to generation of regulatory CD4-positive T cell subset with immune suppressive functions. Acts as an endocytic pattern recognition receptor involved in antitumor immunity. During tumorigenesis, recognizes Tn antigens and its sialylated forms Neu5Ac-Tn and Neu5Gc-Tn expressed on tumor cell mucins. On immature dendritic cells, can internalize Tn-terminated immunogens and target them to endolysosomal compartment for MHC class I and II antigen presentation to CD8-positive and CD4-positive T cells, respectively. This is C-type lectin domain family 10 member A from Homo sapiens (Human).